We begin with the raw amino-acid sequence, 499 residues long: Gamma-aminobutyric acid receptor subunit beta (499 aa).

The first 23 residues, 1 to 23, serve as a signal peptide directing secretion; that stretch reads MWGIIVPFFSASLMCSLVAVVRC. Over 24-251 the chain is Extracellular; it reads QQDTDHFANV…IFQLQRNIGY (228 aa). Asn32, Asn98, Asn106, and Asn152 each carry an N-linked (GlcNAc...) asparagine glycan. Cysteines 167 and 181 form a disulfide. 3 consecutive transmembrane segments (helical) span residues 252-273, 278-299, and 311-333; these read FIFQTYLPSILIVMLSWVSFWI, TSARVALGITTVLTMTTISNGV, and AIDIYLVMCFVFVFAALLEYAAV. Over 334-475 the chain is Cytoplasmic; it reads NYTYWGARAK…RVQDVNTIDK (142 aa). Residues 476–499 traverse the membrane as a helical segment; it reads YARLMFPLLFIIFNTSYWSVYLLT.

This sequence belongs to the ligand-gated ion channel (TC 1.A.9) family. Gamma-aminobutyric acid receptor (TC 1.A.9.5) subfamily. In terms of assembly, generally pentameric. There are five types of GABA(A) receptor chains: alpha, beta, gamma, delta, and rho.

The protein localises to the postsynaptic cell membrane. It is found in the cell membrane. Functionally, GABA, an inhibitory neurotransmitter, mediates neuronal inhibition by binding to the GABA/benzodiazepine receptor and opening an integral chloride channel. This is Gamma-aminobutyric acid receptor subunit beta from Lymnaea stagnalis (Great pond snail).